Consider the following 88-residue polypeptide: Large ribosomal subunit protein bL27 (88 aa).

Residues 1 to 24 are disordered; that stretch reads MAHKKGTGSTRNGRDSNSKRLGVK.

This sequence belongs to the bacterial ribosomal protein bL27 family.

The polypeptide is Large ribosomal subunit protein bL27 (Synechococcus sp. (strain CC9311)).